Consider the following 442-residue polypeptide: Endothelin receptor type B (442 aa).

The N-terminal stretch at 1–26 (MQSSASRCGRALVALLLACGLLGVWG) is a signal peptide. Residues 27-101 (EKRGFPPAQA…RKIEINKTFK (75 aa)) lie on the Extracellular side of the membrane. 2 N-linked (GlcNAc...) asparagine glycosylation sites follow: asparagine 60 and asparagine 97. A helical membrane pass occupies residues 102 to 126 (YINTIVSCLVFVLGIIGNSTLLRII). Topologically, residues 127 to 137 (YKNKCMRNGPN) are cytoplasmic. Residues 138 to 163 (ILIASLALGDLLHIIIDIPINAYKLL) form a helical membrane-spanning segment. The Extracellular segment spans residues 164 to 175 (AGDWPFGAEMCK). The cysteines at positions 174 and 255 are disulfide-linked. A helical membrane pass occupies residues 176 to 197 (LVPFIQKASVGITVLSLCALSI). At 198-218 (DRYRAVASWSRIKGIGVPKWT) the chain is on the cytoplasmic side. A helical transmembrane segment spans residues 219-243 (AVEIVLIWVVSVVLAVPEAIGFDVI). Topologically, residues 244–271 (TSDYKGKPLRVCMLNPFQKTAFMQFYKT) are extracellular. Residues 272–296 (AKDWWLFSFYFCLPLAITAIFYTLM) traverse the membrane as a helical segment. Over 297-324 (TCEMLRKKSGMQIALNDHLKQRREVAKT) the chain is Cytoplasmic. Position 305 is a phosphoserine (serine 305). The helical transmembrane segment at 325–350 (VFCLVLVFALCWLPLHLSRILKLTLY) threads the bilayer. Topologically, residues 351-362 (DQSNPQRCELLS) are extracellular. A helical membrane pass occupies residues 363–389 (FLLVLDYIGINMASLNSCINPIALYLV). Over 390 to 442 (SKRFKNCFKSCLCCWCQTFEEKQSLEEKQSCLKFKANDHGYDNFRSSNKYSSS) the chain is Cytoplasmic. 3 S-palmitoyl cysteine lipidation sites follow: cysteine 402, cysteine 403, and cysteine 405. A Phosphoserine modification is found at serine 419. At tyrosine 439 the chain carries Phosphotyrosine. Phosphoserine is present on residues serine 440, serine 441, and serine 442.

Belongs to the G-protein coupled receptor 1 family. Endothelin receptor subfamily. EDNRB sub-subfamily. Widely distributed in cell types of a variety of tissues.

The protein localises to the cell membrane. Functionally, non-specific receptor for endothelin 1, 2, and 3. Mediates its action by association with G proteins that activate a phosphatidylinositol-calcium second messenger system. The chain is Endothelin receptor type B from Rattus norvegicus (Rat).